Here is a 180-residue protein sequence, read N- to C-terminus: Crossover junction endodeoxyribonuclease RuvC (180 aa).

Active-site residues include Asp-7, Glu-66, and Asp-138. Residues Asp-7, Glu-66, and Asp-138 each contribute to the Mg(2+) site.

The protein belongs to the RuvC family. In terms of assembly, homodimer which binds Holliday junction (HJ) DNA. The HJ becomes 2-fold symmetrical on binding to RuvC with unstacked arms; it has a different conformation from HJ DNA in complex with RuvA. In the full resolvosome a probable DNA-RuvA(4)-RuvB(12)-RuvC(2) complex forms which resolves the HJ. Mg(2+) serves as cofactor.

The protein localises to the cytoplasm. The catalysed reaction is Endonucleolytic cleavage at a junction such as a reciprocal single-stranded crossover between two homologous DNA duplexes (Holliday junction).. Its function is as follows. The RuvA-RuvB-RuvC complex processes Holliday junction (HJ) DNA during genetic recombination and DNA repair. Endonuclease that resolves HJ intermediates. Cleaves cruciform DNA by making single-stranded nicks across the HJ at symmetrical positions within the homologous arms, yielding a 5'-phosphate and a 3'-hydroxyl group; requires a central core of homology in the junction. The consensus cleavage sequence is 5'-(A/T)TT(C/G)-3'. Cleavage occurs on the 3'-side of the TT dinucleotide at the point of strand exchange. HJ branch migration catalyzed by RuvA-RuvB allows RuvC to scan DNA until it finds its consensus sequence, where it cleaves and resolves the cruciform DNA. In Burkholderia orbicola (strain AU 1054), this protein is Crossover junction endodeoxyribonuclease RuvC.